The primary structure comprises 483 residues: Centrosomal protein cep57l1 (483 aa).

Positions 94 to 228 (EHKKVLESEK…AQVQTSLEVN (135 aa)) form a coiled coil. Disordered stretches follow at residues 237–261 (AQNSTQRKVKKKKQSKLKNSVSKEP), 303–325 (PQVSQKNPKTAEHKPSVLPGGSR), and 416–460 (KEQP…SKAS). A compositionally biased stretch (basic residues) spans 243-252 (RKVKKKKQSK). A coiled-coil region spans residues 375-418 (EDLERELDYVVKQMEIKSDQIMKLKRHQLNVNKLKKTAKLLKEQ). Positions 420–435 (RPTSVTKLAADKQNTG) are enriched in polar residues.

Belongs to the translokin family. In terms of assembly, interacts with clip1, mis12, ndc80 and zwint. Interacts with gamma-tubulin.

The protein resides in the cytoplasm. It localises to the cytoskeleton. The protein localises to the microtubule organizing center. It is found in the centrosome. Its subcellular location is the chromosome. The protein resides in the centromere. It localises to the kinetochore. The protein localises to the spindle. Required for spindle microtubule attachment to both kinetochores and centrosomes. Also functions to tether minus-ends of spindle microtubules to centrosomes. May act by forming ring-like structures around microtubules, or by serving as a cross-linker or scaffold at the attachment site. The polypeptide is Centrosomal protein cep57l1 (cep57l1) (Xenopus tropicalis (Western clawed frog)).